We begin with the raw amino-acid sequence, 429 residues long: Histidine--tRNA ligase (429 aa).

It belongs to the class-II aminoacyl-tRNA synthetase family. As to quaternary structure, homodimer.

It localises to the cytoplasm. The catalysed reaction is tRNA(His) + L-histidine + ATP = L-histidyl-tRNA(His) + AMP + diphosphate + H(+). The polypeptide is Histidine--tRNA ligase (Pseudomonas aeruginosa (strain UCBPP-PA14)).